The sequence spans 233 residues: uncharacterized protein (233 aa).

This sequence belongs to the asfivirus H233R family.

This is an uncharacterized protein from African swine fever virus (isolate Tick/South Africa/Pretoriuskop Pr4/1996) (ASFV).